A 232-amino-acid chain; its full sequence is Phosphoadenosine 5'-phosphosulfate reductase (232 aa).

Cys-228 acts as the Nucleophile; cysteine thiosulfonate intermediate in catalysis.

This sequence belongs to the PAPS reductase family. CysH subfamily.

It is found in the cytoplasm. It carries out the reaction [thioredoxin]-disulfide + sulfite + adenosine 3',5'-bisphosphate + 2 H(+) = [thioredoxin]-dithiol + 3'-phosphoadenylyl sulfate. The protein operates within sulfur metabolism; hydrogen sulfide biosynthesis; sulfite from sulfate: step 3/3. In terms of biological role, catalyzes the formation of sulfite from phosphoadenosine 5'-phosphosulfate (PAPS) using thioredoxin as an electron donor. The chain is Phosphoadenosine 5'-phosphosulfate reductase from Synechococcus sp. (strain ATCC 27144 / PCC 6301 / SAUG 1402/1) (Anacystis nidulans).